The chain runs to 259 residues: Ribonuclease HII (259 aa).

Positions 1–26 (MLSTPPKLPSAHGPVHFPRRSGTGMN) are disordered. The RNase H type-2 domain occupies 55–243 (APVAGADEAG…VRAQQLVLFE (189 aa)). Aspartate 61, glutamate 62, and aspartate 152 together coordinate a divalent metal cation.

It belongs to the RNase HII family. The cofactor is Mn(2+). Mg(2+) is required as a cofactor.

The protein resides in the cytoplasm. The enzyme catalyses Endonucleolytic cleavage to 5'-phosphomonoester.. Endonuclease that specifically degrades the RNA of RNA-DNA hybrids. This chain is Ribonuclease HII, found in Azorhizobium caulinodans (strain ATCC 43989 / DSM 5975 / JCM 20966 / LMG 6465 / NBRC 14845 / NCIMB 13405 / ORS 571).